Consider the following 325-residue polypeptide: Acetyl-coenzyme A carboxylase carboxyl transferase subunit beta (325 aa).

A CoA carboxyltransferase N-terminal domain is found at 24–293 (LWIKCPDSGH…AEIEVVTPEP (270 aa)).

The protein belongs to the AccD/PCCB family. Acetyl-CoA carboxylase is a heterohexamer composed of biotin carboxyl carrier protein (AccB), biotin carboxylase (AccC) and two subunits each of ACCase subunit alpha (AccA) and ACCase subunit beta (AccD).

The protein localises to the cytoplasm. The catalysed reaction is N(6)-carboxybiotinyl-L-lysyl-[protein] + acetyl-CoA = N(6)-biotinyl-L-lysyl-[protein] + malonyl-CoA. The protein operates within lipid metabolism; malonyl-CoA biosynthesis; malonyl-CoA from acetyl-CoA: step 1/1. In terms of biological role, component of the acetyl coenzyme A carboxylase (ACC) complex. Biotin carboxylase (BC) catalyzes the carboxylation of biotin on its carrier protein (BCCP) and then the CO(2) group is transferred by the transcarboxylase to acetyl-CoA to form malonyl-CoA. This is Acetyl-coenzyme A carboxylase carboxyl transferase subunit beta from Rhodopseudomonas palustris (strain BisA53).